The chain runs to 314 residues: GDSL-like esterase Rv1075c (314 aa).

Positions 1-21 (MPRRSTIALATAGALASTGTA) are cleaved as a signal peptide. Serine 80 (nucleophile) is an active-site residue. The active-site Proton donor is the aspartate 244. The Proton acceptor role is filled by histidine 247. The segment at 276–314 (IHETPSRPGTATLEPGHTRHSMMSRLRRPRPARAVPTGG) is disordered. Residues 293–306 (TRHSMMSRLRRPRP) show a composition bias toward basic residues.

The protein belongs to the 'GDSL' lipolytic enzyme family.

The enzyme catalyses an acetyl ester + H2O = an aliphatic alcohol + acetate + H(+). The catalysed reaction is a butanoate ester + H2O = an aliphatic alcohol + butanoate + H(+). It carries out the reaction triacetin + H2O = diacetylglycerol + acetate + H(+). It catalyses the reaction 1,2,3-tributanoylglycerol + H2O = dibutanoylglycerol + butanoate + H(+). Esterase activity is significantly inhibited by the serine modifier phenylmethylsulfonyl fluoride (PMSF). Completely inhibited by diethyl pyrocarbonate. In terms of biological role, esterase that preferentially hydrolyzes short-chain fatty acids, particularly pNP-acetate (C2) and pNP-butyrate (C4). Also has weak activity with pNP-hexanoate (C6) and pNP-octanoate (C8). It can also hydrolyze short-chain tryglycerides such as triacetin and tributyrin. Important for intracellular survival. This Mycobacterium tuberculosis (strain ATCC 25618 / H37Rv) protein is GDSL-like esterase Rv1075c.